The primary structure comprises 225 residues: UPF0758 protein Ssed_0385 (225 aa).

The region spanning 102–224 is the MPN domain; it reads ILSDPDLTRD…IVSFAERGWI (123 aa). Zn(2+)-binding residues include histidine 173, histidine 175, and aspartate 186. A JAMM motif motif is present at residues 173–186; that stretch reads HNHPSGVAEPSLAD.

The protein belongs to the UPF0758 family.

This Shewanella sediminis (strain HAW-EB3) protein is UPF0758 protein Ssed_0385.